Here is a 143-residue protein sequence, read N- to C-terminus: uncharacterized protein (143 aa).

2 helical membrane-spanning segments follow: residues 20–39 (FKYC…WITV) and 113–135 (YFSL…ITGL).

Its subcellular location is the membrane. This is an uncharacterized protein from Saccharomyces cerevisiae (strain ATCC 204508 / S288c) (Baker's yeast).